We begin with the raw amino-acid sequence, 426 residues long: S-adenosylmethionine synthase (426 aa).

His22 is an ATP binding site. A Mg(2+)-binding site is contributed by Asp24. Position 50 (Glu50) interacts with K(+). L-methionine is bound by residues Glu63 and Gln106. Residues 106–116 (QSPDISQGVTA) are flexible loop. ATP contacts are provided by residues 181–183 (DGK), 257–258 (KF), Asp266, 272–273 (RK), Ala289, and Lys293. Asp266 contacts L-methionine. Lys297 provides a ligand contact to L-methionine.

The protein belongs to the AdoMet synthase family. Homotetramer; dimer of dimers. Mg(2+) serves as cofactor. Requires K(+) as cofactor.

Its subcellular location is the cytoplasm. It carries out the reaction L-methionine + ATP + H2O = S-adenosyl-L-methionine + phosphate + diphosphate. The protein operates within amino-acid biosynthesis; S-adenosyl-L-methionine biosynthesis; S-adenosyl-L-methionine from L-methionine: step 1/1. In terms of biological role, catalyzes the formation of S-adenosylmethionine (AdoMet) from methionine and ATP. The overall synthetic reaction is composed of two sequential steps, AdoMet formation and the subsequent tripolyphosphate hydrolysis which occurs prior to release of AdoMet from the enzyme. The polypeptide is S-adenosylmethionine synthase (Synechocystis sp. (strain ATCC 27184 / PCC 6803 / Kazusa)).